The following is a 260-amino-acid chain: Exosome complex component Rrp4 (260 aa).

Positions 59–128 (NDVVIGIVIV…SSMKVELALR (70 aa)) constitute an S1 motif domain. One can recognise a KH domain in the interval 136 to 194 (KTGQIIKVESVKVPRVIGHGGSMISMLKKETNCSIFVGQNGRIWIDGKDEDIELLSKAL).

This sequence belongs to the RRP4 family. In terms of assembly, component of the archaeal exosome complex. Forms a trimer of Rrp4 and/or Csl4 subunits. The trimer associates with a hexameric ring-like arrangement composed of 3 Rrp41-Rrp42 heterodimers.

The protein resides in the cytoplasm. Non-catalytic component of the exosome, which is a complex involved in RNA degradation. Increases the RNA binding and the efficiency of RNA degradation. Confers strong poly(A) specificity to the exosome. The chain is Exosome complex component Rrp4 from Methanosarcina acetivorans (strain ATCC 35395 / DSM 2834 / JCM 12185 / C2A).